The sequence spans 289 residues: Segregation and condensation protein A (289 aa).

The segment covering 1–18 (MSEDRRSPTDEAPREGEL) has biased composition (basic and acidic residues). Residues 1–24 (MSEDRRSPTDEAPREGELPRSPGD) are disordered.

It belongs to the ScpA family. As to quaternary structure, component of the Structural Maintenance of Chromosome (SMC) condensin-like complex composed of ScpA, ScpB and the Smc homodimer. ScpA and ScpB bind to the head domain of Smc. The presence of the three proteins is required for the association of the complex with DNA.

It is found in the cytoplasm. Functionally, a conditionally essential component of the chromosome segregation machinery. Participates in chromosomal partition during cell division. Important for positioning of ParB-parS complexes (ori of replication) and of the ter replication site, as well as for segration of the ParB-parS complex and thus chromosome segregation. May act via the formation of a condensin-like complex containing Smc, ScpA and ScpB that pulls DNA away from mid-cell into both cell halves. In Myxococcus xanthus (strain DK1622), this protein is Segregation and condensation protein A.